A 407-amino-acid polypeptide reads, in one-letter code: Probable endo-beta-1,4-glucanase celB (407 aa).

The first 18 residues, 1-18, serve as a signal peptide directing secretion; it reads MALTLAATALVLLPLVTA. N-linked (GlcNAc...) asparagine glycosylation occurs at asparagine 136. Residue glutamate 216 is the Nucleophile of the active site. Residue glutamate 221 is the Proton donor of the active site.

It belongs to the glycosyl hydrolase 7 (cellulase C) family.

The protein resides in the secreted. The enzyme catalyses Endohydrolysis of (1-&gt;4)-beta-D-glucosidic linkages in cellulose, lichenin and cereal beta-D-glucans.. Its function is as follows. Has endoglucanase activity on substrates containing beta-1,4 glycosidic bonds, like in carboxymethylcellulose (CMC), hydroxyethylcellulose (HEC) and beta-glucan. Involved in the degradation of complex natural cellulosic substrates. In Neosartorya fischeri (strain ATCC 1020 / DSM 3700 / CBS 544.65 / FGSC A1164 / JCM 1740 / NRRL 181 / WB 181) (Aspergillus fischerianus), this protein is Probable endo-beta-1,4-glucanase celB (celB).